Here is a 179-residue protein sequence, read N- to C-terminus: Ribosome maturation factor RimM (179 aa).

The PRC barrel domain occupies 102-175 (VEMWWDRDLV…RIVVDPPPGL (74 aa)).

This sequence belongs to the RimM family. As to quaternary structure, binds ribosomal protein uS19.

The protein localises to the cytoplasm. An accessory protein needed during the final step in the assembly of 30S ribosomal subunit, possibly for assembly of the head region. Essential for efficient processing of 16S rRNA. May be needed both before and after RbfA during the maturation of 16S rRNA. It has affinity for free ribosomal 30S subunits but not for 70S ribosomes. The sequence is that of Ribosome maturation factor RimM from Frankia casuarinae (strain DSM 45818 / CECT 9043 / HFP020203 / CcI3).